The following is a 269-amino-acid chain: Regulatory protein RecX (269 aa).

Belongs to the RecX family.

The protein localises to the cytoplasm. Modulates RecA activity. The chain is Regulatory protein RecX from Lactococcus lactis subsp. cremoris (strain MG1363).